A 1383-amino-acid chain; its full sequence is Palladin (1383 aa).

Disordered stretches follow at residues Met-1–Lys-22, Asp-52–Cys-169, and Phe-183–Gly-238. Basic and acidic residues predominate over residues His-78–Asp-96. Residues Arg-191 to Asp-201 show a composition bias toward polar residues. At Ser-192 the chain carries Phosphoserine. A compositionally biased stretch (low complexity) spans Gln-210–Pro-223. One can recognise an Ig-like C2-type 1 domain in the interval Pro-271–Phe-360. A disulfide bond links Cys-292 and Cys-344. Residue Ser-401 is modified to Phosphoserine. Positions Pro-440–Thr-539 constitute an Ig-like C2-type 2 domain. A disulfide bridge links Cys-462 with Cys-521. Residues Phe-562 to Pro-566 are interaction with VASP. Disordered stretches follow at residues Glu-609–Pro-653, Ala-673–Ser-728, and Ala-740–His-846. The residue at position 632 (Ser-632) is a Phosphoserine. Residue Thr-635 is modified to Phosphothreonine. The residue at position 641 (Ser-641) is a Phosphoserine. The tract at residues Pro-646–Arg-676 is interaction with LASP1. The interaction with SORBS2, SPIN90 and SRC stretch occupies residues Arg-676 to Ala-696. Residues Gln-677–Phe-697 are compositionally biased toward pro residues. A phosphoserine mark is found at Ser-684, Ser-688, and Ser-728. The span at Pro-745–Ser-763 shows a compositional bias: low complexity. The interaction with EPS8 stretch occupies residues Ser-766–Pro-831. The interval Ser-796–Pro-831 is interaction with SORBS2, SPIN90, SRC and PFN1. Pro residues-rich tracts occupy residues Pro-797–Phe-807 and Asp-817–Ser-830. An interaction with VASP region spans residues Phe-819–Pro-823. A compositionally biased stretch (polar residues) spans Gly-832–His-846. Residues Gln-833–Arg-890 are interaction with ACTN. 3 positions are modified to phosphoserine: Ser-893, Ser-979, and Ser-984. An Ig-like C2-type 3 domain is found at Pro-1001–Ser-1085. A disordered region spans residues Asn-1096–Asn-1125. Residues Arg-1098 to His-1108 are compositionally biased toward low complexity. A phosphoserine mark is found at Ser-1101, Ser-1104, Ser-1106, and Ser-1116. At Ser-1118 the chain carries Phosphoserine; by PKB/AKT1. Ser-1121 is subject to Phosphoserine. 2 Ig-like C2-type domains span residues Pro-1135 to Ala-1226 and Pro-1233 to Asp-1324. Interaction with EZR regions lie at residues Phe-1137–Ala-1226 and Phe-1236–Tyr-1326. Residues Cys-1156 and Cys-1208 are joined by a disulfide bond. At Ser-1352 the chain carries Phosphoserine.

The protein belongs to the myotilin/palladin family. Interacts with EPS8. Interacts with LASP1. Interacts with VASP. Interacts with ACTN. Interacts with SORBS2. Interacts with PFN1. Interacts with LPP. Interacts with SPIN90. Interacts with SRC. Interacts with EZR. Interacts with RAI14. Post-translationally, phosphorylated predominantly on serines and, to a lesser extent, on tyrosines. Phosphorylation at Ser-1118 by PKB/AKT1 modulates cytoskeletal organization and cell motility. In terms of tissue distribution, detected in both muscle and non-muscle tissues. High expression in prostate, ovary, colon, and kidney. Not detected in spleen, skeletal muscle, lung and peripheral blood lymphocytes (at protein level). Protein is overexpressed in FA6, HPAF, IMIM-PC2, SUIT-2 and PancTu-II sporadic pancreatic cancer cell lines.

It is found in the cytoplasm. The protein localises to the cytoskeleton. The protein resides in the cell junction. Its subcellular location is the focal adhesion. It localises to the myofibril. It is found in the sarcomere. The protein localises to the z line. The protein resides in the cell projection. Its subcellular location is the ruffle. It localises to the podosome. It is found in the lamellipodium. The protein localises to the axon. The protein resides in the growth cone. Its function is as follows. Cytoskeletal protein required for organization of normal actin cytoskeleton. Roles in establishing cell morphology, motility, cell adhesion and cell-extracellular matrix interactions in a variety of cell types. May function as a scaffolding molecule with the potential to influence both actin polymerization and the assembly of existing actin filaments into higher-order arrays. Binds to proteins that bind to either monomeric or filamentous actin. Localizes at sites where active actin remodeling takes place, such as lamellipodia and membrane ruffles. Different isoforms may have functional differences. Involved in the control of morphological and cytoskeletal changes associated with dendritic cell maturation. Involved in targeting ACTN to specific subcellular foci. This is Palladin (PALLD) from Homo sapiens (Human).